The sequence spans 433 residues: 23S rRNA (uracil(1939)-C(5))-methyltransferase RlmD (433 aa).

The TRAM domain maps to 10–68; the sequence is RTTTRQIITVSVNDLDSFGQGVARHNGKTLFIPGLLPQENAEVTVTEDKKQYARAKVVR. [4Fe-4S] cluster is bound by residues C81, C87, C90, and C162. S-adenosyl-L-methionine contacts are provided by Q265, F294, N299, E315, N342, and D363. The active-site Nucleophile is C389.

The protein belongs to the class I-like SAM-binding methyltransferase superfamily. RNA M5U methyltransferase family. RlmD subfamily.

It catalyses the reaction uridine(1939) in 23S rRNA + S-adenosyl-L-methionine = 5-methyluridine(1939) in 23S rRNA + S-adenosyl-L-homocysteine + H(+). Its function is as follows. Catalyzes the formation of 5-methyl-uridine at position 1939 (m5U1939) in 23S rRNA. The sequence is that of 23S rRNA (uracil(1939)-C(5))-methyltransferase RlmD from Shigella sonnei (strain Ss046).